The chain runs to 240 residues: Phosphoribosylaminoimidazole-succinocarboxamide synthase (240 aa).

The protein belongs to the SAICAR synthetase family.

The enzyme catalyses 5-amino-1-(5-phospho-D-ribosyl)imidazole-4-carboxylate + L-aspartate + ATP = (2S)-2-[5-amino-1-(5-phospho-beta-D-ribosyl)imidazole-4-carboxamido]succinate + ADP + phosphate + 2 H(+). It participates in purine metabolism; IMP biosynthesis via de novo pathway; 5-amino-1-(5-phospho-D-ribosyl)imidazole-4-carboxamide from 5-amino-1-(5-phospho-D-ribosyl)imidazole-4-carboxylate: step 1/2. The protein is Phosphoribosylaminoimidazole-succinocarboxamide synthase of Wigglesworthia glossinidia brevipalpis.